A 97-amino-acid chain; its full sequence is Co-chaperonin GroES (97 aa).

Belongs to the GroES chaperonin family. Heptamer of 7 subunits arranged in a ring. Interacts with the chaperonin GroEL.

Its subcellular location is the cytoplasm. Its function is as follows. Together with the chaperonin GroEL, plays an essential role in assisting protein folding. The GroEL-GroES system forms a nano-cage that allows encapsulation of the non-native substrate proteins and provides a physical environment optimized to promote and accelerate protein folding. GroES binds to the apical surface of the GroEL ring, thereby capping the opening of the GroEL channel. The protein is Co-chaperonin GroES of Stenotrophomonas maltophilia (Pseudomonas maltophilia).